A 521-amino-acid polypeptide reads, in one-letter code: Probable feruloyl esterase B (521 aa).

The first 17 residues, 1–17 (MKVSSLLSVALPGAALA), serve as a signal peptide directing secretion. 2 disulfide bridges follow: C26–C72 and C61–C111. N-linked (GlcNAc...) asparagine glycans are attached at residues N37, N51, N77, N95, N144, and N177. 3 cysteine pairs are disulfide-bonded: C184–C438, C253–C270, and C279–C288. S185 acts as the Acyl-ester intermediate in catalysis. Positions 254, 257, 259, 261, and 263 each coordinate Ca(2+). N-linked (GlcNAc...) asparagine glycans are attached at residues N284, N347, N352, and N378. Catalysis depends on charge relay system residues D397 and H437. 2 N-linked (GlcNAc...) asparagine glycosylation sites follow: N488 and N511. A disulfide bridge connects residues C498 and C520.

It belongs to the tannase family.

It is found in the secreted. It catalyses the reaction feruloyl-polysaccharide + H2O = ferulate + polysaccharide.. Its function is as follows. Involved in degradation of plant cell walls. Hydrolyzes the feruloyl-arabinose ester bond in arabinoxylans as well as the feruloyl-galactose and feruloyl-arabinose ester bonds in pectin. This Aspergillus niger (strain ATCC MYA-4892 / CBS 513.88 / FGSC A1513) protein is Probable feruloyl esterase B (faeB).